The chain runs to 183 residues: Dual-action ribosomal maturation protein DarP (183 aa).

The protein belongs to the DarP family.

The protein localises to the cytoplasm. Its function is as follows. Member of a network of 50S ribosomal subunit biogenesis factors which assembles along the 30S-50S interface, preventing incorrect 23S rRNA structures from forming. Promotes peptidyl transferase center (PTC) maturation. This Salmonella enteritidis PT4 (strain P125109) protein is Dual-action ribosomal maturation protein DarP.